The primary structure comprises 115 residues: SPbeta prophage-derived uncharacterized membrane protein YosE (115 aa).

The next 3 membrane-spanning stretches (helical) occupy residues 20–42 (IVVGLLIFVEALTMSLIVYYGLN), 58–78 (VHVTLPHAFVIGVLLNVFVKG), and 95–115 (GKSLFHSTFALIVLYVSTLFI).

The protein resides in the cell membrane. The chain is SPbeta prophage-derived uncharacterized membrane protein YosE (yosE) from Bacillus subtilis (strain 168).